Here is a 386-residue protein sequence, read N- to C-terminus: WD repeat-containing protein 89 (386 aa).

WD repeat units follow at residues Lys-21–Glu-65, Gly-68–Ala-107, Gly-112–Ser-156, Thr-167–Ala-207, Asn-213–Pro-253, and Gly-318–Thr-357.

In Rattus norvegicus (Rat), this protein is WD repeat-containing protein 89 (Wdr89).